Here is a 741-residue protein sequence, read N- to C-terminus: Double-stranded RNA-specific editase 1 (741 aa).

Residues 1–79 form a disordered region; it reads MDIEDEENMS…RRKTPGPVLP (79 aa). Serine 26 bears the Phosphoserine mark. Positions 33–49 are enriched in gly residues; the sequence is PGPGEGSQLSNGGGGGP. Over residues 63-73 the composition is skewed to basic residues; the sequence is SKYRLKKRRKT. One can recognise a DRBM 1 domain in the interval 78-144; it reads LPKNALMQLN…AEKALRSFVQ (67 aa). 2 interaction with substrate RNA regions span residues 83-88 and 104-105; these read LMQLNE and VH. The residue at position 149 (serine 149) is a Phosphoserine. The 68-residue stretch at 231–298 folds into the DRBM 2 domain; that stretch reads PSGKNPVMIL…AQSALAAIFN (68 aa). Interaction with substrate RNA stretches follow at residues 237-242 and histidine 259; that span reads VMILNE. The region spanning 370 to 737 is the A to I editase domain; that stretch reads SVSTGTKCIN…VEKPTEQDQF (368 aa). A Zn(2+)-binding site is contributed by histidine 394. Glutamate 396 functions as the Proton donor in the catalytic mechanism. Arginine 400 and arginine 401 together coordinate 1D-myo-inositol hexakisphosphate. Residue cysteine 451 coordinates Zn(2+). Residues 486–518 are disordered; that stretch reads RPPGLLSDPSTSTFQGAGTTEPADRHPNRKARG. The segment covering 493-503 has biased composition (polar residues); sequence DPSTSTFQGAG. Position 556 (cysteine 556) interacts with Zn(2+). Residues lysine 559, arginine 562, lysine 669, lysine 702, lysine 712, and lysine 730 each coordinate 1D-myo-inositol hexakisphosphate.

In terms of assembly, homodimer. Homodimerization is essential for its catalytic activity. Can form heterodimers with isoform 5 of ADAR/ADAR1. 1D-myo-inositol hexakisphosphate is required as a cofactor. As to expression, highly expressed in brain and heart and at lower levels in placenta. Fair expression in lung, liver and kidney. Detected in brain, heart, kidney, lung and liver (at protein level). In terms of tissue distribution, highly expressed in hippocampus and colon. Expressed in pediatric astrocytomas and the protein has a decreased RNA-editing activity. The decrease in RNA editing correlates with the grade of malignancy of the tumors, with the high grade tumors showing lower editing is seen.

The protein resides in the nucleus. It is found in the nucleolus. It carries out the reaction adenosine in double-stranded RNA + H2O + H(+) = inosine in double-stranded RNA + NH4(+). Functionally, catalyzes the hydrolytic deamination of adenosine to inosine in double-stranded RNA (dsRNA) referred to as A-to-I RNA editing. This may affect gene expression and function in a number of ways that include mRNA translation by changing codons and hence the amino acid sequence of proteins; pre-mRNA splicing by altering splice site recognition sequences; RNA stability by changing sequences involved in nuclease recognition; genetic stability in the case of RNA virus genomes by changing sequences during viral RNA replication; and RNA structure-dependent activities such as microRNA production or targeting or protein-RNA interactions. Can edit both viral and cellular RNAs and can edit RNAs at multiple sites (hyper-editing) or at specific sites (site-specific editing). Its cellular RNA substrates include: bladder cancer-associated protein (BLCAP), neurotransmitter receptors for glutamate (GRIA2 and GRIK2) and serotonin (HTR2C), GABA receptor (GABRA3) and potassium voltage-gated channel (KCNA1). Site-specific RNA editing of transcripts encoding these proteins results in amino acid substitutions which consequently alter their functional activities. Edits GRIA2 at both the Q/R and R/G sites efficiently but converts the adenosine in hotspot1 much less efficiently. Can exert a proviral effect towards human immunodeficiency virus type 1 (HIV-1) and enhances its replication via both an editing-dependent and editing-independent mechanism. The former involves editing of adenosines in the 5'UTR while the latter occurs via suppression of EIF2AK2/PKR activation and function. Can inhibit cell proliferation and migration and can stimulate exocytosis. Has a lower catalytic activity than isoform 2. In terms of biological role, has a higher catalytic activity than isoform 1. This is Double-stranded RNA-specific editase 1 from Homo sapiens (Human).